The primary structure comprises 330 residues: Delta-aminolevulinic acid dehydratase (330 aa).

Residues cysteine 122, cysteine 124, histidine 131, and cysteine 132 each contribute to the Zn(2+) site. Lysine 199 functions as the Schiff-base intermediate with substrate in the catalytic mechanism. Lysine 199 is subject to N6-succinyllysine. Arginine 209 contacts 5-aminolevulinate. Serine 215 is subject to Phosphoserine. Arginine 221 is a binding site for 5-aminolevulinate. Cysteine 223 contacts Zn(2+). Catalysis depends on lysine 252, which acts as the Schiff-base intermediate with substrate. N6-succinyllysine is present on lysine 252. Residues serine 279 and tyrosine 318 each coordinate 5-aminolevulinate.

Belongs to the ALAD family. As to quaternary structure, homooctamer; active form. Homohexamer; low activity form. Requires Zn(2+) as cofactor.

It is found in the cytoplasm. It localises to the cytosol. It carries out the reaction 2 5-aminolevulinate = porphobilinogen + 2 H2O + H(+). It participates in porphyrin-containing compound metabolism; protoporphyrin-IX biosynthesis; coproporphyrinogen-III from 5-aminolevulinate: step 1/4. Its activity is regulated as follows. Can alternate between a fully active homooctamer and a low-activity homohexamer. A bound magnesium ion may promote the assembly of the fully active homooctamer. The magnesium-binding site is absent in the low-activity homohexamer. Inhibited by compounds that favor the hexameric state. Inhibited by divalent lead ions. The lead ions partially displace the zinc cofactor. In terms of biological role, catalyzes an early step in the biosynthesis of tetrapyrroles. Binds two molecules of 5-aminolevulinate per subunit, each at a distinct site, and catalyzes their condensation to form porphobilinogen. This is Delta-aminolevulinic acid dehydratase (Alad) from Rattus norvegicus (Rat).